Reading from the N-terminus, the 205-residue chain is MIGWLKGDVQHRDQKGSRNLVLIACGGVGYDVQLIERDWQAVSTDQRHEFWIHQVVSADNLQLFGFLQLAERDLFRELIQVSGVGPQAGLALLNACAYKELVTALVHSDLKTLCRAKGVGKRTAERLALELRTRLTDSVASTGPERNQLDPVAPDLIATLETLGFETHEIRDALQRLNGMGGPQDGDDDDAWLRACIKLMSSTDP.

Positions methionine 1–leucine 67 are domain I. The interval glutamine 68–arginine 146 is domain II. Residues asparagine 147–aspartate 155 are flexible linker. The domain III stretch occupies residues aspartate 155–proline 205.

This sequence belongs to the RuvA family. As to quaternary structure, homotetramer. Forms an RuvA(8)-RuvB(12)-Holliday junction (HJ) complex. HJ DNA is sandwiched between 2 RuvA tetramers; dsDNA enters through RuvA and exits via RuvB. An RuvB hexamer assembles on each DNA strand where it exits the tetramer. Each RuvB hexamer is contacted by two RuvA subunits (via domain III) on 2 adjacent RuvB subunits; this complex drives branch migration. In the full resolvosome a probable DNA-RuvA(4)-RuvB(12)-RuvC(2) complex forms which resolves the HJ.

The protein resides in the cytoplasm. Functionally, the RuvA-RuvB-RuvC complex processes Holliday junction (HJ) DNA during genetic recombination and DNA repair, while the RuvA-RuvB complex plays an important role in the rescue of blocked DNA replication forks via replication fork reversal (RFR). RuvA specifically binds to HJ cruciform DNA, conferring on it an open structure. The RuvB hexamer acts as an ATP-dependent pump, pulling dsDNA into and through the RuvAB complex. HJ branch migration allows RuvC to scan DNA until it finds its consensus sequence, where it cleaves and resolves the cruciform DNA. The chain is Holliday junction branch migration complex subunit RuvA from Parasynechococcus marenigrum (strain WH8102).